The primary structure comprises 118 residues: Small ribosomal subunit protein uS13 (118 aa).

The interval Asn-94–Arg-118 is disordered. A compositionally biased stretch (basic residues) spans Ala-106–Arg-118.

Belongs to the universal ribosomal protein uS13 family. As to quaternary structure, part of the 30S ribosomal subunit. Forms a loose heterodimer with protein S19. Forms two bridges to the 50S subunit in the 70S ribosome.

In terms of biological role, located at the top of the head of the 30S subunit, it contacts several helices of the 16S rRNA. In the 70S ribosome it contacts the 23S rRNA (bridge B1a) and protein L5 of the 50S subunit (bridge B1b), connecting the 2 subunits; these bridges are implicated in subunit movement. Contacts the tRNAs in the A and P-sites. The polypeptide is Small ribosomal subunit protein uS13 (Psychrobacter sp. (strain PRwf-1)).